A 184-amino-acid polypeptide reads, in one-letter code: Thymidine kinase (184 aa).

Residues 10 to 17 (GPMYSGKT) and 83 to 86 (DEVQ) each bind ATP. E84 acts as the Proton acceptor in catalysis. Residues C140, C143, C173, and C176 each coordinate Zn(2+).

Belongs to the thymidine kinase family. Homotetramer.

Its subcellular location is the cytoplasm. It catalyses the reaction thymidine + ATP = dTMP + ADP + H(+). In Thermotoga sp. (strain RQ2), this protein is Thymidine kinase.